Consider the following 267-residue polypeptide: uncharacterized protein (267 aa).

The tract at residues 72-267 (LTENNNNNNT…EEKKKKKKKK (196 aa)) is disordered. The span at 122-145 (DSVSSSTTTTIITNNKKINNNNNN) shows a compositional bias: low complexity. The segment covering 159-175 (ENEKSVQKSKKEKESPK) has biased composition (basic and acidic residues). Residues 194–218 (SESSSSSSSSSSSESSSSESESSSS) are compositionally biased toward low complexity.

This is an uncharacterized protein from Dictyostelium discoideum (Social amoeba).